Consider the following 244-residue polypeptide: Cell division protein ZapD (244 aa).

The protein belongs to the ZapD family. As to quaternary structure, interacts with FtsZ.

Its subcellular location is the cytoplasm. Functionally, cell division factor that enhances FtsZ-ring assembly. Directly interacts with FtsZ and promotes bundling of FtsZ protofilaments, with a reduction in FtsZ GTPase activity. This chain is Cell division protein ZapD, found in Shewanella baltica (strain OS223).